We begin with the raw amino-acid sequence, 657 residues long: Glycogen debranching enzyme (657 aa).

D336 serves as the catalytic Nucleophile. E371 (proton donor) is an active-site residue. Residues 458 to 467 show a composition bias toward basic and acidic residues; that stretch reads NEANGEENRD. The disordered stretch occupies residues 458 to 479; the sequence is NEANGEENRDGTNNNYSNNHGK.

It belongs to the glycosyl hydrolase 13 family.

The enzyme catalyses Hydrolysis of (1-&gt;6)-alpha-D-glucosidic linkages to branches with degrees of polymerization of three or four glucose residues in limit dextrin.. It functions in the pathway glycan degradation; glycogen degradation. Removes maltotriose and maltotetraose chains that are attached by 1,6-alpha-linkage to the limit dextrin main chain, generating a debranched limit dextrin. This is Glycogen debranching enzyme from Escherichia coli (strain SE11).